The sequence spans 248 residues: Triosephosphate isomerase (248 aa).

Substrate is bound by residues Asn-10 and Lys-12. The active-site Electrophile is His-95. The active-site Proton acceptor is Glu-165.

Belongs to the triosephosphate isomerase family. Homodimer.

The enzyme catalyses D-glyceraldehyde 3-phosphate = dihydroxyacetone phosphate. Its pathway is carbohydrate biosynthesis; gluconeogenesis. It participates in carbohydrate degradation; glycolysis; D-glyceraldehyde 3-phosphate from glycerone phosphate: step 1/1. The polypeptide is Triosephosphate isomerase (TPI1) (Kluyveromyces lactis (strain ATCC 8585 / CBS 2359 / DSM 70799 / NBRC 1267 / NRRL Y-1140 / WM37) (Yeast)).